Reading from the N-terminus, the 551-residue chain is Arginine--tRNA ligase (551 aa).

Residues 125-135 (ANPTGPLHIGH) carry the 'HIGH' region motif.

This sequence belongs to the class-I aminoacyl-tRNA synthetase family. As to quaternary structure, monomer.

The protein resides in the cytoplasm. The catalysed reaction is tRNA(Arg) + L-arginine + ATP = L-arginyl-tRNA(Arg) + AMP + diphosphate. This chain is Arginine--tRNA ligase, found in Nitratidesulfovibrio vulgaris (strain DSM 19637 / Miyazaki F) (Desulfovibrio vulgaris).